Here is a 354-residue protein sequence, read N- to C-terminus: Protein-arginine kinase (354 aa).

The region spanning 24–254 (IVLSSRIRLA…QQIIQQEKMA (231 aa)) is the Phosphagen kinase C-terminal domain. Residues 27–31 (SSRIR), histidine 92, arginine 125, 176–180 (RASVM), and 207–212 (RGIYGE) each bind ATP. Residues 337–342 (RDYRRA) carry the RDXXRA motif of the pArg binding pocket involved in allosteric regulation motif.

Belongs to the ATP:guanido phosphotransferase family.

It catalyses the reaction L-arginyl-[protein] + ATP = N(omega)-phospho-L-arginyl-[protein] + ADP + H(+). Appears to be allosterically activated by the binding of pArg-containing polypeptides to the pArg-binding pocket localized in the C-terminal domain of McsB. Its function is as follows. Catalyzes the specific phosphorylation of arginine residues in a large number of proteins. Is part of the bacterial stress response system. Protein arginine phosphorylation has a physiologically important role and is involved in the regulation of many critical cellular processes, such as protein homeostasis, motility, competence, and stringent and stress responses, by regulating gene expression and protein activity. The chain is Protein-arginine kinase from Bacillus cereus (strain G9842).